We begin with the raw amino-acid sequence, 118 residues long: Large ribosomal subunit protein bL20 (118 aa).

It belongs to the bacterial ribosomal protein bL20 family. In terms of assembly, part of the 50S ribosomal subunit. Contacts proteins L13 and L21.

Binds directly to 23S rRNA, probably serving to organize its structure. The chain is Large ribosomal subunit protein bL20 (rplT) from Deinococcus radiodurans (strain ATCC 13939 / DSM 20539 / JCM 16871 / CCUG 27074 / LMG 4051 / NBRC 15346 / NCIMB 9279 / VKM B-1422 / R1).